Consider the following 143-residue polypeptide: Nucleoside diphosphate kinase (143 aa).

ATP-binding residues include Lys-11, Phe-59, Arg-87, Thr-93, Arg-104, and Asn-114. His-117 functions as the Pros-phosphohistidine intermediate in the catalytic mechanism.

Belongs to the NDK family. Homotetramer. Mg(2+) is required as a cofactor.

It localises to the cytoplasm. The enzyme catalyses a 2'-deoxyribonucleoside 5'-diphosphate + ATP = a 2'-deoxyribonucleoside 5'-triphosphate + ADP. It catalyses the reaction a ribonucleoside 5'-diphosphate + ATP = a ribonucleoside 5'-triphosphate + ADP. In terms of biological role, major role in the synthesis of nucleoside triphosphates other than ATP. The ATP gamma phosphate is transferred to the NDP beta phosphate via a ping-pong mechanism, using a phosphorylated active-site intermediate. This is Nucleoside diphosphate kinase from Idiomarina loihiensis (strain ATCC BAA-735 / DSM 15497 / L2-TR).